Here is a 241-residue protein sequence, read N- to C-terminus: GTP cyclohydrolase 1 type 2 homolog (241 aa).

Residues His-62, His-63, Asp-101, His-207, and Glu-211 each contribute to the a divalent metal cation site.

Belongs to the GTP cyclohydrolase I type 2/NIF3 family. In terms of assembly, homohexamer.

The sequence is that of GTP cyclohydrolase 1 type 2 homolog from Campylobacter jejuni subsp. jejuni serotype O:2 (strain ATCC 700819 / NCTC 11168).